Here is a 122-residue protein sequence, read N- to C-terminus: MIQGFTRLNVADNSGAKEIMCIKVLGGSKRRYASVGDVIVASVKKALPTGKVKKGKVVKAVVVRTKKEIQRENGSLIRFDDNAAVIIDDKKEPIGTRIFGPVSRETRYAGFMKIVSLAPEVW.

This sequence belongs to the universal ribosomal protein uL14 family. As to quaternary structure, part of the 50S ribosomal subunit. Forms a cluster with proteins L3 and L19. In the 70S ribosome, L14 and L19 interact and together make contacts with the 16S rRNA in bridges B5 and B8.

Its function is as follows. Binds to 23S rRNA. Forms part of two intersubunit bridges in the 70S ribosome. The protein is Large ribosomal subunit protein uL14 of Sulfurovum sp. (strain NBC37-1).